Here is a 75-residue protein sequence, read N- to C-terminus: Protein BRICK1 (75 aa).

A2 is modified (N-acetylalanine). Residues 41–72 (MSCRSRLATLNEKLTALERRIEYIEARVTKGE) are a coiled coil.

The protein belongs to the BRK1 family. In terms of assembly, homotrimer when in free form. Directly interacts with WASF2. Component of the WAVE1 complex composed of ABI2, CYFIP1 or CYFIP2, BRK1, NCKAP1 and WASF1/WAVE1. Within the complex, a heterodimer containing NCKAP1 and CYFIP1 interacts with a heterotrimer formed by WAVE1, ABI2 and BRK1.

It localises to the cytoplasm. The protein resides in the cytoskeleton. Involved in regulation of actin and microtubule organization. Part of a WAVE complex that activates the Arp2/3 complex. As component of the WAVE1 complex, required for BDNF-NTRK2 endocytic trafficking and signaling from early endosomes. The sequence is that of Protein BRICK1 (BRK1) from Homo sapiens (Human).